A 162-amino-acid polypeptide reads, in one-letter code: Shikimate kinase (162 aa).

11–16 (GSGKSS) is a binding site for ATP. Residue serine 15 participates in Mg(2+) binding. Substrate is bound by residues aspartate 33, arginine 57, and glycine 80. The interval 109–123 (NQKEREKRPLLNNLT) is LID domain. Residue arginine 116 coordinates ATP. Residue arginine 132 participates in substrate binding.

Belongs to the shikimate kinase family. Monomer. The cofactor is Mg(2+).

It localises to the cytoplasm. The catalysed reaction is shikimate + ATP = 3-phosphoshikimate + ADP + H(+). Its pathway is metabolic intermediate biosynthesis; chorismate biosynthesis; chorismate from D-erythrose 4-phosphate and phosphoenolpyruvate: step 5/7. Catalyzes the specific phosphorylation of the 3-hydroxyl group of shikimic acid using ATP as a cosubstrate. The polypeptide is Shikimate kinase (aroK) (Helicobacter pylori (strain ATCC 700392 / 26695) (Campylobacter pylori)).